Here is a 97-residue protein sequence, read N- to C-terminus: Alpha-latrotoxin associated low molecular weight protein 2 (97 aa).

The N-terminal stretch at 1–19 (MFKLICIVFIATILSITSA) is a signal peptide. Intrachain disulfides connect C36–C72, C52–C68, and C55–C81.

It belongs to the arthropod CHH/MIH/GIH/VIH hormone family. As to expression, expressed by the venom gland.

The protein resides in the secreted. Functionally, may increase the toxicity of alpha-latrotoxin and/or other venom components. Is non-toxic to mice and to the cockroach Periplaneta americana. In Steatoda grossa (False black widow), this protein is Alpha-latrotoxin associated low molecular weight protein 2.